We begin with the raw amino-acid sequence, 158 residues long: SsrA-binding protein (158 aa).

Over residues 133-147 (KRQALRERQDNREAQ) the composition is skewed to basic and acidic residues. The interval 133 to 158 (KRQALRERQDNREAQRAMASRKHLGE) is disordered.

It belongs to the SmpB family.

It localises to the cytoplasm. In terms of biological role, required for rescue of stalled ribosomes mediated by trans-translation. Binds to transfer-messenger RNA (tmRNA), required for stable association of tmRNA with ribosomes. tmRNA and SmpB together mimic tRNA shape, replacing the anticodon stem-loop with SmpB. tmRNA is encoded by the ssrA gene; the 2 termini fold to resemble tRNA(Ala) and it encodes a 'tag peptide', a short internal open reading frame. During trans-translation Ala-aminoacylated tmRNA acts like a tRNA, entering the A-site of stalled ribosomes, displacing the stalled mRNA. The ribosome then switches to translate the ORF on the tmRNA; the nascent peptide is terminated with the 'tag peptide' encoded by the tmRNA and targeted for degradation. The ribosome is freed to recommence translation, which seems to be the essential function of trans-translation. In Leifsonia xyli subsp. xyli (strain CTCB07), this protein is SsrA-binding protein.